The following is a 501-amino-acid chain: Bifunctional purine biosynthesis protein PurH (501 aa).

Residues 1 to 144 (MKKRALISVF…KNFKDVVVLS (144 aa)) enclose the MGS-like domain.

This sequence belongs to the PurH family.

The enzyme catalyses (6R)-10-formyltetrahydrofolate + 5-amino-1-(5-phospho-beta-D-ribosyl)imidazole-4-carboxamide = 5-formamido-1-(5-phospho-D-ribosyl)imidazole-4-carboxamide + (6S)-5,6,7,8-tetrahydrofolate. It carries out the reaction IMP + H2O = 5-formamido-1-(5-phospho-D-ribosyl)imidazole-4-carboxamide. The protein operates within purine metabolism; IMP biosynthesis via de novo pathway; 5-formamido-1-(5-phospho-D-ribosyl)imidazole-4-carboxamide from 5-amino-1-(5-phospho-D-ribosyl)imidazole-4-carboxamide (10-formyl THF route): step 1/1. It functions in the pathway purine metabolism; IMP biosynthesis via de novo pathway; IMP from 5-formamido-1-(5-phospho-D-ribosyl)imidazole-4-carboxamide: step 1/1. The sequence is that of Bifunctional purine biosynthesis protein PurH from Clostridium perfringens (strain SM101 / Type A).